The following is a 1923-amino-acid chain: MVPVSFCFFFLLLLLSAGESSSQLVSGPHITDVNILLPPKMKNPVEYRLQGSDGCFKWSWDHHDILSVTPEFNSSSHCSTSARLRSISPYSGRKETAVYATDIQTGMVIRCKVFIDNFSRIQIFHNSIKLDLDGLSMLRVRAFDNEDNEFSSLVGLQFIWKLMPESGGSTHHLAHVPLKESPLTDCGGLCGYLDIQKKLEDSGVFADLFVVKGTKIGHEKVSVHLLEAPLTHIADEIVLTVAEAMSLEPRSPVYVLMGASFGYTLKVMRGNVPQAVDLPSPHHRWSVLNSSVAQVDSLIGLTKALSLGVTTVVVEDTRVAGHIQGSSINVVTPDTLILYISPWSMSGDLITESKPFPSSMHWYVVSGRQYLIQMKIFSGRPDAHEIYITETDDIKLYGKDSDYWKIVSLPDELSSEYGQRNSRILNAISPGLGELTSTLTYFSGHQESKEVLKVVQEIRVCEKVQFTLNSEDDTPKVLLPWTPAVYQEMELIVTGGCAKASSDYKWFTSDISILSVSAYGIIQAKRPGIATVKVVSTFDSQNFDEVIVEVSIPSSMVMLQNFPVETVVGSHLKAAVTMKALNGATFSRCDAFNSLIKWKTGSESFVIVNATSEMMMLDELRSMDSSPPCSRASIYTASTGRTVLQATLAKEFHYFDKSLSESIDLKATLTIGAYLPLSVRQDSDGNHHGGYWFDKAQEETDFGVSKLYLVPGTYVDVMLLGGPERWDDNVEFTETVKTLYEDEEDLTSRVNVHHEVDRRANMYRISCQKLGSYKLVFLRGNLLGIDHPVPAVAEALLSVHCSLPSSVVLIVDEPVNKLDVIRAASQADRAPGRLRVTPVTVANGQIIRVAAVGISEFGEAFSNSSTLSLRWELTSCNNLAYWDDDYNSKMTKSGWERFLALRNESGLCTVRATVSGIDYSFKSQYSTLLPQGSESTLTDAVRLQLVSTLRVTPEFNLVFFNPNAKVNLSMTGGSCLWEAVVNNSRVAEVIRPPSGLQCSQMMLSPKGLGTTIVTVYDIGVSPPLSALALIKVADVDWIKIASGDEISIMEGSTHSIDLLTGIDDGMTFDSSQYSLMDIMVHIEDDLVEHVTVDEDSLSVGEHVATSSFKIAARRLGITTLYVSARQQSGGKVLSQTIKVEVYSPPRLHPQGIFLVPGASYVLTIEGGPTMNVSVDYTTVDNEVAKIEKSGRLYATSPGNTTIYATIYGSEGAVICQAIGNAEVGLPATAMLVAQSDTVAVGHEMPVSPSFPEGDLLSFYELCSAYKWTIEDEKVLIFIASSINVEENAGFVNVVQGRSAGKTRVTIAFSCDFVSPGLYSESRTYEASMILSVVPDLPLSLGAPMTWVLPPFYTSSGLLPSSSEPQKHRDGQSHRGNIVYSILKDCSSRADFERDTISINGGSVKTTDSNNVACIQAKDRTSGRIEIAACVRVAEVAQIRMKSEGIPFHVIDLAVGGELELPINYYDTLGIPFLEAHGVTTYNVETNHRDVVFIKTVNDQPSAYIKGIKHGKALIRVSIGDNLRKSDYVLVSVGAHIFPQNPVIHTGNLLNFSITGADNEVTGQWFTSNRSVISVNVASGQAKAISQGSTHVTFKGHGLKLQTKVTVLFGNTIYVDSPGETLTNVHVPAEGYKFPVKFRENKFAVTEHGNKATFNCQVDPPFIGYTKPWMDLDTGNTYCLFFPYSPEHLVHSMSITKDMKPHVSFSVDASLKEARRVSGSASALLIGGFSVTGPDKLNINPDSNTTIISLVGNTDVQIHCRNKGRLSISLIKRDDFGIAGHAQYKVNVLRSEQFTDRIIITLPATGQIVEIDVCYDTGESLVASSKDGYSVLLKILWGVLVLVVSVIILMKVIDRQVPTGATGTATYSGNAAQGTPERRSGTVIYHEESPRTPSPFMEYVKRTVDETPYYRREGRRRFNPQNTM.

An N-terminal signal peptide occupies residues 1-22 (MVPVSFCFFFLLLLLSAGESSS). N-linked (GlcNAc...) asparagine glycosylation is found at asparagine 73, asparagine 117, asparagine 289, asparagine 609, asparagine 863, asparagine 903, asparagine 967, asparagine 982, asparagine 1171, asparagine 1199, asparagine 1550, asparagine 1568, and asparagine 1743. The BIG2 domain occupies 1152–1205 (IFLVPGASYVLTIEGGPTMNVSVDYTTVDNEVAKIEKSGRLYATSPGNTTIYAT). The helical transmembrane segment at 1829 to 1849 (SVLLKILWGVLVLVVSVIILM) threads the bilayer.

The protein belongs to the NUP210 family. Part of the nuclear pore complex (NPC). The NPC has an eight-fold symmetrical structure comprising a central transport channel and two rings, the cytoplasmic and nuclear rings, to which eight filaments are attached. The cytoplasmic filaments have loose ends, while the nuclear filaments are joined in a distal ring, forming a nuclear basket. NPCs are highly dynamic in configuration and composition, and can be devided in 3 subcomplexes, the NUP62 subcomplex, the NUP107-160 subcomplex and the NUP93 subcomplex, containing approximately 30 different nucleoporin proteins.

It localises to the nucleus envelope. The protein resides in the nucleus membrane. The protein localises to the nucleus. Its subcellular location is the nuclear pore complex. This Arabidopsis thaliana (Mouse-ear cress) protein is Nuclear pore complex protein GP210.